A 217-amino-acid polypeptide reads, in one-letter code: Somatotropin (217 aa).

Residues 1–26 (MAPGSRTSLLLAFGLLCLPWLQEGSA) form the signal peptide. His-44 provides a ligand contact to Zn(2+). Cys-79 and Cys-191 are disulfide-bonded. Phosphoserine is present on Ser-132. Position 200 (Glu-200) interacts with Zn(2+). A disulfide bridge links Cys-208 with Cys-215.

It belongs to the somatotropin/prolactin family.

Its subcellular location is the secreted. Functionally, plays an important role in growth control. Its major role in stimulating body growth is to stimulate the liver and other tissues to secrete IGF1. It stimulates both the differentiation and proliferation of myoblasts. It also stimulates amino acid uptake and protein synthesis in muscle and other tissues. This chain is Somatotropin (GH1), found in Pan troglodytes (Chimpanzee).